The primary structure comprises 1108 residues: Isoleucine--tRNA ligase (1108 aa).

The 'HIGH' region signature appears at 53 to 63; sequence PFANGLPHYGH. The short motif at 654–658 is the 'KMSKS' region element; it reads KLSKR. Lys657 is a binding site for ATP.

The protein belongs to the class-I aminoacyl-tRNA synthetase family. IleS type 2 subfamily. In terms of assembly, monomer. Zn(2+) is required as a cofactor.

It localises to the cytoplasm. The catalysed reaction is tRNA(Ile) + L-isoleucine + ATP = L-isoleucyl-tRNA(Ile) + AMP + diphosphate. Catalyzes the attachment of isoleucine to tRNA(Ile). As IleRS can inadvertently accommodate and process structurally similar amino acids such as valine, to avoid such errors it has two additional distinct tRNA(Ile)-dependent editing activities. One activity is designated as 'pretransfer' editing and involves the hydrolysis of activated Val-AMP. The other activity is designated 'posttransfer' editing and involves deacylation of mischarged Val-tRNA(Ile). The chain is Isoleucine--tRNA ligase from Rickettsia bellii (strain OSU 85-389).